The primary structure comprises 1066 residues: Kinesin-like protein Klp61F (1066 aa).

Residues 19 to 356 (NIQVYVRVRP…LEYAHRAKNI (338 aa)) form the Kinesin motor domain. Position 103 to 110 (103 to 110 (GQTGTGKT)) interacts with ATP. Residues 362–462 (VNQKLTKKTV…KTEENLLNTK (101 aa)) adopt a coiled-coil conformation. T520 carries the phosphothreonine modification. Coiled coils occupy residues 540–569 (DRMQ…QLSQ), 639–738 (LMSK…QIKN), 808–875 (CSML…LITE), and 889–918 (DLVQ…ELVR). Position 933 is a phosphothreonine (T933). The residue at position 949 (S949) is a Phosphoserine. Residues 990 to 1002 (ELSETETIMNSTP) show a composition bias toward polar residues. 2 disordered regions span residues 990-1009 (ELSE…VDGV) and 1016-1066 (GTTR…ENVA). A compositionally biased stretch (low complexity) spans 1033 to 1051 (GGKRSSSLSRSLTPSKTSP). The residue at position 1043 (S1043) is a Phosphoserine. At T1045 the chain carries Phosphothreonine. Phosphoserine occurs at positions 1050 and 1054.

The protein belongs to the TRAFAC class myosin-kinesin ATPase superfamily. Kinesin family. BimC subfamily. In terms of assembly, homotetramer. Consists of two pairs of polypeptides associated by coiled-coil interactions to form two homodimers. The homodimers are linked by lateral interactions between their coiled-coil regions to form a bipolar homotetramer consisting of a central rod with two motor domains projecting from either end. Parallel coiled coils extend from each pair of motor heads, switch to two antiparallel coiled coils in the central region and then back to parallel coiled coils. Interacts with Wee1. In terms of processing, phosphorylation is required for localization to mitotic spindles. Phosphorylation of Thr-933 during mitosis controls association with the spindle apparatus. Phosphorylated in vitro by Wee1.

It localises to the cytoplasm. It is found in the cytoskeleton. The protein localises to the spindle. The protein resides in the spindle pole. Important role in mitotic dividing cells. Microtubule motor required for spindle body separation. Slow plus-end directed microtubule motor capable of cross-linking and sliding apart antiparallel microtubules, thereby pushing apart the associated spindle poles during spindle assembly and function. Forms cross-links between microtubules within interpolar microtubule bundles. Contributes to the length of the metaphase spindle, maintains the prometaphase spindle by antagonizing Ncd, drives anaphase B, and also contributes to normal chromosome congression, kinetochore spacing, and anaphase A rates. Displays microtubule-stimulated ATPase activity. Required for normal fusome organization. Required in non-mitotic cells for transport of secretory proteins from the Golgi complex to the cell surface. The protein is Kinesin-like protein Klp61F of Drosophila melanogaster (Fruit fly).